A 318-amino-acid chain; its full sequence is Cytochrome f (318 aa).

The first 34 residues, 1–34, serve as a signal peptide directing secretion; that stretch reads MKNNYLANLIKTLQAIVVSVALLAPLVLPSAVNA. Residues Phe-35, Cys-55, Cys-58, and His-59 each coordinate heme. The chain crosses the membrane as a helical span at residues 284 to 304; sequence VKGLIAFFFTVILAQILLVLK.

The protein belongs to the cytochrome f family. The 4 large subunits of the cytochrome b6-f complex are cytochrome b6, subunit IV (17 kDa polypeptide, petD), cytochrome f and the Rieske protein, while the 4 small subunits are PetG, PetL, PetM and PetN. The complex functions as a dimer. Heme is required as a cofactor.

The protein resides in the plastid. It is found in the chloroplast thylakoid membrane. Component of the cytochrome b6-f complex, which mediates electron transfer between photosystem II (PSII) and photosystem I (PSI), cyclic electron flow around PSI, and state transitions. The chain is Cytochrome f from Rhodomonas salina (Cryptomonas salina).